The sequence spans 440 residues: Thymidine phosphorylase (440 aa).

Belongs to the thymidine/pyrimidine-nucleoside phosphorylase family. As to quaternary structure, homodimer.

It carries out the reaction thymidine + phosphate = 2-deoxy-alpha-D-ribose 1-phosphate + thymine. Its pathway is pyrimidine metabolism; dTMP biosynthesis via salvage pathway; dTMP from thymine: step 1/2. Functionally, the enzymes which catalyze the reversible phosphorolysis of pyrimidine nucleosides are involved in the degradation of these compounds and in their utilization as carbon and energy sources, or in the rescue of pyrimidine bases for nucleotide synthesis. This Shigella dysenteriae serotype 1 (strain Sd197) protein is Thymidine phosphorylase.